Reading from the N-terminus, the 173-residue chain is MAIILGIDPGSRVTGYGVIRQQGRQLIYLGSGCIRTQVPDLPSRLKRIYAGVSEIITQFSPDVFSVEQVFMAKNADSALKLGQARGVAILAAVNNDLPVFEYAARQVKQSVVGTGGADKSQVQHMVRSILKLSAAPQADAADALAIAITHCHFNQNLLRVGDPRLVLTRGRLR.

Residues aspartate 8, glutamate 67, and aspartate 139 contribute to the active site. Mg(2+)-binding residues include aspartate 8, glutamate 67, and aspartate 139.

This sequence belongs to the RuvC family. As to quaternary structure, homodimer which binds Holliday junction (HJ) DNA. The HJ becomes 2-fold symmetrical on binding to RuvC with unstacked arms; it has a different conformation from HJ DNA in complex with RuvA. In the full resolvosome a probable DNA-RuvA(4)-RuvB(12)-RuvC(2) complex forms which resolves the HJ. Mg(2+) is required as a cofactor.

It localises to the cytoplasm. It carries out the reaction Endonucleolytic cleavage at a junction such as a reciprocal single-stranded crossover between two homologous DNA duplexes (Holliday junction).. Functionally, the RuvA-RuvB-RuvC complex processes Holliday junction (HJ) DNA during genetic recombination and DNA repair. Endonuclease that resolves HJ intermediates. Cleaves cruciform DNA by making single-stranded nicks across the HJ at symmetrical positions within the homologous arms, yielding a 5'-phosphate and a 3'-hydroxyl group; requires a central core of homology in the junction. The consensus cleavage sequence is 5'-(A/T)TT(C/G)-3'. Cleavage occurs on the 3'-side of the TT dinucleotide at the point of strand exchange. HJ branch migration catalyzed by RuvA-RuvB allows RuvC to scan DNA until it finds its consensus sequence, where it cleaves and resolves the cruciform DNA. This is Crossover junction endodeoxyribonuclease RuvC from Proteus mirabilis (strain HI4320).